The chain runs to 193 residues: Chaperone protein TorD (193 aa).

The protein belongs to the TorD/DmsD family. TorD subfamily.

The protein resides in the cytoplasm. Its function is as follows. Involved in the biogenesis of TorA. Acts on TorA before the insertion of the molybdenum cofactor and, as a result, probably favors a conformation of the apoenzyme that is competent for acquiring the cofactor. The chain is Chaperone protein TorD from Histophilus somni (strain 129Pt) (Haemophilus somnus).